Here is a 389-residue protein sequence, read N- to C-terminus: S-adenosylmethionine synthase (389 aa).

An ATP-binding site is contributed by H18. Mg(2+) is bound at residue D20. E46 lines the K(+) pocket. The L-methionine site is built by E59 and Q103. The interval 103-113 (QSADIAMGVDS) is flexible loop. ATP contacts are provided by residues 168–170 (DSK), D244, 250–251 (RK), A267, and K271. D244 provides a ligand contact to L-methionine. An L-methionine-binding site is contributed by K275.

Belongs to the AdoMet synthase family. Homotetramer; dimer of dimers. The cofactor is Mg(2+). K(+) serves as cofactor.

It is found in the cytoplasm. The enzyme catalyses L-methionine + ATP + H2O = S-adenosyl-L-methionine + phosphate + diphosphate. It participates in amino-acid biosynthesis; S-adenosyl-L-methionine biosynthesis; S-adenosyl-L-methionine from L-methionine: step 1/1. Functionally, catalyzes the formation of S-adenosylmethionine (AdoMet) from methionine and ATP. The overall synthetic reaction is composed of two sequential steps, AdoMet formation and the subsequent tripolyphosphate hydrolysis which occurs prior to release of AdoMet from the enzyme. The protein is S-adenosylmethionine synthase of Pelagibacter ubique (strain HTCC1062).